The primary structure comprises 180 residues: NADH-quinone oxidoreductase subunit I (180 aa).

4Fe-4S ferredoxin-type domains lie at 50–80 and 90–119; these read LTRN…LQKS and KFFR…LMPD. 8 residues coordinate [4Fe-4S] cluster: Cys-60, Cys-63, Cys-66, Cys-70, Cys-99, Cys-102, Cys-105, and Cys-109.

Belongs to the complex I 23 kDa subunit family. In terms of assembly, NDH-1 is composed of 13 different subunits. Subunits NuoA, H, J, K, L, M, N constitute the membrane sector of the complex. [4Fe-4S] cluster is required as a cofactor.

It is found in the cell membrane. It carries out the reaction a quinone + NADH + 5 H(+)(in) = a quinol + NAD(+) + 4 H(+)(out). In terms of biological role, NDH-1 shuttles electrons from NADH, via FMN and iron-sulfur (Fe-S) centers, to quinones in the respiratory chain. The immediate electron acceptor for the enzyme in this species is believed to be ubiquinone. Couples the redox reaction to proton translocation (for every two electrons transferred, four hydrogen ions are translocated across the cytoplasmic membrane), and thus conserves the redox energy in a proton gradient. This chain is NADH-quinone oxidoreductase subunit I, found in Buchnera aphidicola subsp. Schizaphis graminum (strain Sg).